The following is a 243-amino-acid chain: MSANPLDQFRISTIFKLPDIGEYNIDFTNASLFMVLSTFLISLSCYVGLRKESVIPNPLQSIIEIIYDFIVSTIESNVGKEGLQYVPLVFTIFTFILVCNLLGILPLGFTVTSHIAVTFAISMIVFISVTFIGFKHQGTHFLHILLPQGTPMWLAPMMVLIELFAYCARPVSLSIRLAANMIAGHTIIKVIAGFVINMNIFLTPLPIAFIIILIGFEIFVAILQAYIFTVLTCVYLSDAVNKH.

Helical transmembrane passes span 29-49 (NASLFMVLSTFLISLSCYVGL), 54-74 (VIPNPLQSIIEIIYDFIVSTI), 89-109 (VFTIFTFILVCNLLGILPLGF), 114-134 (HIAVTFAISMIVFISVTFIGF), 141-161 (FLHILLPQGTPMWLAPMMVLI), 177-197 (LAANMIAGHTIIKVIAGFVIN), 200-220 (IFLTPLPIAFIIILIGFEIFV), and 221-241 (AILQAYIFTVLTCVYLSDAVN).

This sequence belongs to the ATPase A chain family. As to quaternary structure, F-type ATPases have 2 components, CF(1) - the catalytic core - and CF(0) - the membrane proton channel. CF(1) has five subunits: alpha(3), beta(3), gamma(1), delta(1), epsilon(1). CF(0) has three main subunits: a(1), b(2) and c(9-12). The alpha and beta chains form an alternating ring which encloses part of the gamma chain. CF(1) is attached to CF(0) by a central stalk formed by the gamma and epsilon chains, while a peripheral stalk is formed by the delta and b chains.

Its subcellular location is the cell inner membrane. In terms of biological role, key component of the proton channel; it plays a direct role in the translocation of protons across the membrane. The chain is ATP synthase subunit a from Ehrlichia ruminantium (strain Welgevonden).